We begin with the raw amino-acid sequence, 530 residues long: UDP-glucuronosyltransferase 1A7 (530 aa).

The first 25 residues, 1–25 (MARAGWTGLLPLYVCLLLTCGFAKA), serve as a signal peptide directing secretion. 3 N-linked (GlcNAc...) asparagine glycosylation sites follow: asparagine 71, asparagine 292, and asparagine 344. A helical transmembrane segment spans residues 488 to 504 (VIGFLLAVVLTVAFITF).

It belongs to the UDP-glycosyltransferase family. In terms of assembly, homodimer. Homooligomer. Interacts with UGT1A1, UGT1A3, UGT1A4, UGT1A6, UGT1A8, UGT1A9 and UGT1A10 to form heterodimers. Isoform 1 interacts with isoform 2/i2 suggesting that oligomerization is involved in negative regulation of transferase activity by isoform 2. Isoform 1 also interacts with respective i2 isoforms of UGT1A1, UGT1A3, UGT1A4, UGT1A6, UGT1A8, UGT1A9 and UGT1A10. Liver and gastric tissue. Isoform 1 and isoform 2 are expressed in esophagus. Neither isoform is expressed in liver, kidney, colon and small intestine.

The protein resides in the endoplasmic reticulum membrane. The catalysed reaction is glucuronate acceptor + UDP-alpha-D-glucuronate = acceptor beta-D-glucuronoside + UDP + H(+). It catalyses the reaction 17alpha-estradiol + UDP-alpha-D-glucuronate = 17alpha-estradiol 3-O-(beta-D-glucuronate) + UDP + H(+). It carries out the reaction prunetin + UDP-alpha-D-glucuronate = prunetin-5-O-beta-D-glucuronide + UDP. The enzyme catalyses 5-epi-5-F2t-IsoP + UDP-alpha-D-glucuronate = 5-epi-5-F2t-IsoP-glucuronide + UDP + H(+). The catalysed reaction is (E)-ferulate + UDP-alpha-D-glucuronate = (E)-ferulic acid beta-D-glucuronate ester + UDP. It catalyses the reaction candesartan + UDP-alpha-D-glucuronate = candesartan O-beta-D-glucuronoside + UDP. It carries out the reaction SN-38 + UDP-alpha-D-glucuronate = SN-38 O-beta-D-glucuronide + UDP + H(+). The enzyme catalyses mycophenolate + UDP-alpha-D-glucuronate = mycophenolate 7-O-beta-D-glucuronide + UDP + H(+). In terms of biological role, UDP-glucuronosyltransferase (UGT) that catalyzes phase II biotransformation reactions in which lipophilic substrates are conjugated with glucuronic acid to increase the metabolite's water solubility, thereby facilitating excretion into either the urine or bile. Essential for the elimination and detoxification of drugs, xenobiotics and endogenous compounds. Catalyzes the glucuronidation of endogenous estrogen hormone epiestradiol. Involved in the glucuronidation of F2-isoprostane (5-epi-5-F2t-IsoP). Involved in the glucuronidation of the phytochemical ferulic acid at the carboxylic acid group. Also catalyzes the glucuronidation of the isoflavones genistein, daidzein, glycitein, formononetin, biochanin A and prunetin, which are phytoestrogens with anticancer and cardiovascular properties. Involved in the glucuronidation of the AGTR1 angiotensin receptor antagonist caderastan, a drug which can inhibit the effect of angiotensin II. Involved in the biotransformation of 7-ethyl-10-hydroxycamptothecin (SN-38), the pharmacologically active metabolite of the anticancer drug irinotecan. Also metabolizes mycophenolate, an immunosuppressive agent. Its function is as follows. Lacks UGT glucuronidation activity but acts as a negative regulator of isoform 1. This is UDP-glucuronosyltransferase 1A7 from Homo sapiens (Human).